Here is a 231-residue protein sequence, read N- to C-terminus: MTVTIALPSKGRMKDESSAIFERAGMRITAVGNDRSYRGRVEGVEDVEITFLSASEIAREIGSGAVDFGVTGEDLVREGLADADARVEFAARLGFGHADVVVAVPEIWYDVDTMADLGDVAADFRARHGRRLAIATKYWRLTQQFFSGSHGIQLYRIVESLGATEGAPASGSADIIVDITSTGSTLKANHLKILSDGVILRSEACLVRARKAEHGGNPLIDRILAAVRSAL.

Belongs to the ATP phosphoribosyltransferase family. Short subfamily. As to quaternary structure, heteromultimer composed of HisG and HisZ subunits.

The protein localises to the cytoplasm. The enzyme catalyses 1-(5-phospho-beta-D-ribosyl)-ATP + diphosphate = 5-phospho-alpha-D-ribose 1-diphosphate + ATP. It participates in amino-acid biosynthesis; L-histidine biosynthesis; L-histidine from 5-phospho-alpha-D-ribose 1-diphosphate: step 1/9. In terms of biological role, catalyzes the condensation of ATP and 5-phosphoribose 1-diphosphate to form N'-(5'-phosphoribosyl)-ATP (PR-ATP). Has a crucial role in the pathway because the rate of histidine biosynthesis seems to be controlled primarily by regulation of HisG enzymatic activity. This chain is ATP phosphoribosyltransferase, found in Sinorhizobium medicae (strain WSM419) (Ensifer medicae).